Consider the following 391-residue polypeptide: MEQMSGELHAASLLYMRRLMKCLGMLPFGQNLFSKGFCYVLLFVSLGFSSYWRFSFDYEFDYDFLNDRFSSTIDLSNFVALVLGHAIIVLELLWGNCSKDVDRQLQAIHSQIKLQLGTSNSTDRVRRYCNWIYGSLIIRWLIFIVVTIYSNRALTINATYSELVFLARFSEFTLYCAVILFIYQELIVGGSNVLDELYRTRYEMWSIRRLSLQKLAKLQAIHNSLWQAIRCLECYFQLSLITLLMKFFIDTSALPYWLYLSRVEHTRVAVQHYVATVECIKLLEIVVPCYLCTRCDAMQRKFLSMFYTVTTDRRSSQLNAALRSLNLQLSQEKYKFSAGGMVDINTEMLGKFFFGMISYIVICIQFSINFRAKKMSNEQMSQNITSTSAPI.

Residues 1–31 are Cytoplasmic-facing; sequence MEQMSGELHAASLLYMRRLMKCLGMLPFGQN. A helical membrane pass occupies residues 32 to 52; that stretch reads LFSKGFCYVLLFVSLGFSSYW. The Extracellular portion of the chain corresponds to 53–74; that stretch reads RFSFDYEFDYDFLNDRFSSTID. Residues 75-95 traverse the membrane as a helical segment; it reads LSNFVALVLGHAIIVLELLWG. Topologically, residues 96 to 128 are cytoplasmic; that stretch reads NCSKDVDRQLQAIHSQIKLQLGTSNSTDRVRRY. A helical membrane pass occupies residues 129–149; it reads CNWIYGSLIIRWLIFIVVTIY. At 150–173 the chain is on the extracellular side; it reads SNRALTINATYSELVFLARFSEFT. The N-linked (GlcNAc...) asparagine glycan is linked to asparagine 157. A helical membrane pass occupies residues 174–194; sequence LYCAVILFIYQELIVGGSNVL. The Cytoplasmic segment spans residues 195–239; the sequence is DELYRTRYEMWSIRRLSLQKLAKLQAIHNSLWQAIRCLECYFQLS. Residues 240–260 form a helical membrane-spanning segment; that stretch reads LITLLMKFFIDTSALPYWLYL. Topologically, residues 261–272 are extracellular; it reads SRVEHTRVAVQH. The chain crosses the membrane as a helical span at residues 273 to 293; that stretch reads YVATVECIKLLEIVVPCYLCT. Over 294–347 the chain is Cytoplasmic; that stretch reads RCDAMQRKFLSMFYTVTTDRRSSQLNAALRSLNLQLSQEKYKFSAGGMVDINTE. The helical transmembrane segment at 348–368 threads the bilayer; sequence MLGKFFFGMISYIVICIQFSI. At 369–391 the chain is on the extracellular side; sequence NFRAKKMSNEQMSQNITSTSAPI. Asparagine 383 is a glycosylation site (N-linked (GlcNAc...) asparagine).

Belongs to the insect chemoreceptor superfamily. Gustatory receptor (GR) family. Gr2a subfamily.

The protein localises to the cell membrane. Functionally, probable gustatory receptor which mediates acceptance or avoidance behavior, depending on its substrates. This is Putative gustatory receptor 98a (Gr98a) from Drosophila melanogaster (Fruit fly).